A 92-amino-acid polypeptide reads, in one-letter code: Transcription factor PRE1 (92 aa).

The region spanning 4–59 (RRSRQSSSAPRISDNQMIDLVSKLRQILPEIGQRRRSDKASASKVLQETCNYIRNL) is the bHLH domain.

Interacts with IBH1 and HFR1. In terms of tissue distribution, expressed in roots, leaves, stems and flowers.

It is found in the nucleus. Its function is as follows. Atypical and probable non DNA-binding bHLH transcription factor that integrates multiple signaling pathways to regulate cell elongation and plant development. Binds IBH1, forming a pair of antagonistic bHLH transcription factors that function downstream of BZR1 to mediate brassinosteroid regulation of cell elongation. Regulates light responses by binding and inhibiting the activity of the bHLH transcription factor HFR1, a critical regulator of light signaling and shade avoidance. May have a regulatory role in various aspects of gibberellin-dependent growth and development. The polypeptide is Transcription factor PRE1 (PRE1) (Arabidopsis thaliana (Mouse-ear cress)).